A 103-amino-acid chain; its full sequence is GP16 protein (103 aa).

This is GP16 protein (GP16) from Orgyia pseudotsugata multicapsid polyhedrosis virus (OpMNPV).